Consider the following 180-residue polypeptide: ATP synthase subunit delta (180 aa).

The protein belongs to the ATPase delta chain family. As to quaternary structure, F-type ATPases have 2 components, F(1) - the catalytic core - and F(0) - the membrane proton channel. F(1) has five subunits: alpha(3), beta(3), gamma(1), delta(1), epsilon(1). F(0) has three main subunits: a(1), b(2) and c(10-14). The alpha and beta chains form an alternating ring which encloses part of the gamma chain. F(1) is attached to F(0) by a central stalk formed by the gamma and epsilon chains, while a peripheral stalk is formed by the delta and b chains.

The protein resides in the cell membrane. Functionally, f(1)F(0) ATP synthase produces ATP from ADP in the presence of a proton or sodium gradient. F-type ATPases consist of two structural domains, F(1) containing the extramembraneous catalytic core and F(0) containing the membrane proton channel, linked together by a central stalk and a peripheral stalk. During catalysis, ATP synthesis in the catalytic domain of F(1) is coupled via a rotary mechanism of the central stalk subunits to proton translocation. This protein is part of the stalk that links CF(0) to CF(1). It either transmits conformational changes from CF(0) to CF(1) or is implicated in proton conduction. The sequence is that of ATP synthase subunit delta from Lactobacillus delbrueckii subsp. bulgaricus (strain ATCC 11842 / DSM 20081 / BCRC 10696 / JCM 1002 / NBRC 13953 / NCIMB 11778 / NCTC 12712 / WDCM 00102 / Lb 14).